The chain runs to 371 residues: Probable cysteine protease RDL5 (371 aa).

The signal sequence occupies residues 1 to 23; it reads MGYAKSAMLIFLLALVIASCATA. Residues 24–143 constitute a propeptide, activation peptide; that stretch reads MDMSVVSSND…NRYKTSDGDV (120 aa). N-linked (GlcNAc...) asparagine glycosylation occurs at asparagine 94. Intrachain disulfides connect cysteine 165/cysteine 206, cysteine 199/cysteine 239, and cysteine 298/cysteine 349. Cysteine 168 is a catalytic residue. Residues histidine 304 and asparagine 324 contribute to the active site.

This sequence belongs to the peptidase C1 family. Expressed in roots, inflorescences and siliques.

Its function is as follows. Possesses protease activity in vitro. The polypeptide is Probable cysteine protease RDL5 (Arabidopsis thaliana (Mouse-ear cress)).